We begin with the raw amino-acid sequence, 177 residues long: ATP synthase subunit delta (177 aa).

The protein belongs to the ATPase delta chain family. F-type ATPases have 2 components, F(1) - the catalytic core - and F(0) - the membrane proton channel. F(1) has five subunits: alpha(3), beta(3), gamma(1), delta(1), epsilon(1). F(0) has three main subunits: a(1), b(2) and c(10-14). The alpha and beta chains form an alternating ring which encloses part of the gamma chain. F(1) is attached to F(0) by a central stalk formed by the gamma and epsilon chains, while a peripheral stalk is formed by the delta and b chains.

It is found in the cell inner membrane. Its function is as follows. F(1)F(0) ATP synthase produces ATP from ADP in the presence of a proton or sodium gradient. F-type ATPases consist of two structural domains, F(1) containing the extramembraneous catalytic core and F(0) containing the membrane proton channel, linked together by a central stalk and a peripheral stalk. During catalysis, ATP synthesis in the catalytic domain of F(1) is coupled via a rotary mechanism of the central stalk subunits to proton translocation. In terms of biological role, this protein is part of the stalk that links CF(0) to CF(1). It either transmits conformational changes from CF(0) to CF(1) or is implicated in proton conduction. This chain is ATP synthase subunit delta, found in Shewanella putrefaciens (strain CN-32 / ATCC BAA-453).